Reading from the N-terminus, the 364-residue chain is 3-isopropylmalate dehydrogenase (364 aa).

Residue 76-89 participates in NAD(+) binding; it reads GPKWDGNAPEKRPE. Substrate-binding residues include Arg-96, Arg-106, Arg-134, and Asp-223. 3 residues coordinate Mg(2+): Asp-223, Asp-247, and Asp-251. 281–293 contacts NAD(+); the sequence is GSAPDIAGTGAAN.

This sequence belongs to the isocitrate and isopropylmalate dehydrogenases family. LeuB type 1 subfamily. As to quaternary structure, homodimer. Mg(2+) serves as cofactor. Requires Mn(2+) as cofactor.

It is found in the cytoplasm. The catalysed reaction is (2R,3S)-3-isopropylmalate + NAD(+) = 4-methyl-2-oxopentanoate + CO2 + NADH. It functions in the pathway amino-acid biosynthesis; L-leucine biosynthesis; L-leucine from 3-methyl-2-oxobutanoate: step 3/4. Functionally, catalyzes the oxidation of 3-carboxy-2-hydroxy-4-methylpentanoate (3-isopropylmalate) to 3-carboxy-4-methyl-2-oxopentanoate. The product decarboxylates to 4-methyl-2 oxopentanoate. The sequence is that of 3-isopropylmalate dehydrogenase from Shouchella clausii (strain KSM-K16) (Alkalihalobacillus clausii).